The following is a 343-amino-acid chain: S-adenosylmethionine:tRNA ribosyltransferase-isomerase (343 aa).

The protein belongs to the QueA family. As to quaternary structure, monomer.

It is found in the cytoplasm. The catalysed reaction is 7-aminomethyl-7-carbaguanosine(34) in tRNA + S-adenosyl-L-methionine = epoxyqueuosine(34) in tRNA + adenine + L-methionine + 2 H(+). Its pathway is tRNA modification; tRNA-queuosine biosynthesis. Transfers and isomerizes the ribose moiety from AdoMet to the 7-aminomethyl group of 7-deazaguanine (preQ1-tRNA) to give epoxyqueuosine (oQ-tRNA). This chain is S-adenosylmethionine:tRNA ribosyltransferase-isomerase, found in Enterococcus faecalis (strain ATCC 700802 / V583).